Consider the following 636-residue polypeptide: Rik1-associated factor 2 (636 aa).

Component of the Clr4 methyltransferase complex (ClrC) composed of at least clr4, rik1, pcu4, rbx1, raf1 and raf2. The cullin pcu4, rik1, raf1, raf2 and the ring-box protein rbx1 are components of an E3 ubiquitin ligase, whose activity is essential for heterochromatin assembly. Interacts with pcu4.

It localises to the cytoplasm. The protein localises to the mitochondrion. The protein resides in the nucleus. It is found in the chromosome. Its function is as follows. Component of the Clr4 methyltransferase complex (ClrC) which contributes to the establishment of heterochromatin by specifically methylating histone H3 to form H3K9me. ClrC preferentially ubiquitylates H3K14 and ClrC-mediated H3 ubiquitination promotes clr4 methyltransferase activity for the methylation of H3K9. H3K9me represents a specific tag for epigenetic transcriptional repression by recruiting swi6/HP1 to methylated histones which leads to transcriptional silencing within centromeric heterochromatin, telomeric regions and at the silent mating-type loci. Has a role in both mitotic and meiotic chromosome segregation. In Schizosaccharomyces pombe (strain 972 / ATCC 24843) (Fission yeast), this protein is Rik1-associated factor 2 (raf2).